The primary structure comprises 304 residues: Homoserine kinase (304 aa).

92–102 (PLARGLGSSAT) is a binding site for ATP.

The protein belongs to the GHMP kinase family. Homoserine kinase subfamily.

It is found in the cytoplasm. The catalysed reaction is L-homoserine + ATP = O-phospho-L-homoserine + ADP + H(+). It functions in the pathway amino-acid biosynthesis; L-threonine biosynthesis; L-threonine from L-aspartate: step 4/5. Catalyzes the ATP-dependent phosphorylation of L-homoserine to L-homoserine phosphate. The protein is Homoserine kinase of Nostoc punctiforme (strain ATCC 29133 / PCC 73102).